The sequence spans 478 residues: MKRVRFAPSPTGYLHLGNARTALFNYLFSRHENATFILRIEDTDLERSKKEYEEMLMEDLKWMGIEWDEGPDAGGPHGPYRQSERLEIYMKYVDKLLKSGDAYYCYCTEEELEQEREKAIAEGRPYRYSGKCRNLTPEERAFYEGKSIKPVIRFKVPDKTVVFEDIIRGHVEIDTKEFGDFVIVRQDGMPVYNFVVVIDDALMGITHVIRGEDHLSNTPKQIVIYEALGFAIPQFAHLPIILGEDRTKLSKRHGAVSVRALKDDGFISEAVFNYLSLLGWHPKEEKEILSKEEIIKQFRIEDVNKSPAIFDRTKLRWMNGVYIREILDLDDLTKRAIPFFEGFGYKADYEFYKKVMSAIRDSIETLMEIKERAKVFFVDEFPYTEEIVNEVKSDENVYKVVEIFYNKIKNLSAITKEDFKNITKEIQKEYGYKGKALFHPIRIALTGEPSGVGLDLLVEVIGIERVKFRLERFLEYFG.

Residues 8 to 18 carry the 'HIGH' region motif; that stretch reads PSPTGYLHLGN. The 'KMSKS' region signature appears at 248–252; that stretch reads KLSKR. Position 251 (Lys-251) interacts with ATP.

The protein belongs to the class-I aminoacyl-tRNA synthetase family. Glutamate--tRNA ligase type 1 subfamily. Monomer.

Its subcellular location is the cytoplasm. The enzyme catalyses tRNA(Glu) + L-glutamate + ATP = L-glutamyl-tRNA(Glu) + AMP + diphosphate. Functionally, catalyzes the attachment of glutamate to tRNA(Glu) in a two-step reaction: glutamate is first activated by ATP to form Glu-AMP and then transferred to the acceptor end of tRNA(Glu). This Sulfurihydrogenibium sp. (strain YO3AOP1) protein is Glutamate--tRNA ligase.